Here is a 318-residue protein sequence, read N- to C-terminus: Basic leucine zipper (bZIP) transcription factor atfB (318 aa).

Disordered regions lie at residues 79 to 100 and 114 to 164; these read LKNTHVRNGQPTPPPFDDKKLQ and FNSS…EKRE. The segment at 160–199 is basic motif; sequence REKREKFLERNRLAASKCRQKKKEHTKLLETRFREVSSKK. The bZIP domain maps to 160–223; it reads REKREKFLER…LNLKNEMLRH (64 aa). The tract at residues 202–216 is leucine-zipper; sequence LESEIEHLRSEVLNL. A disordered region spans residues 247 to 304; it reads TPNRDLVSPMRSPEQMTASTPHGLSFGFDGPMQLPSEMGSPLDQRRDSEQSIMTESSY.

Belongs to the bZIP family. ATF subfamily.

Its subcellular location is the nucleus. Transcription factor that acts as a key player in the regulatory circuit that integrates secondary metabolism and cellular response to oxidative stress. Regulates the genes involved in development, stress response, and secondary metabolism through direct binding to their promoters. Particularly involved in the resistance to oxidative stress in asexual conidiospores. Binds aflatoxin gene promoters carrying the cAMP-response element (CRE1) under aflatoxin-inducing conditions. The sequence is that of Basic leucine zipper (bZIP) transcription factor atfB from Aspergillus parasiticus (strain ATCC 56775 / NRRL 5862 / SRRC 143 / SU-1).